A 107-amino-acid polypeptide reads, in one-letter code: UPF0145 protein TT_C0892 (107 aa).

It belongs to the UPF0145 family.

The protein is UPF0145 protein TT_C0892 of Thermus thermophilus (strain ATCC BAA-163 / DSM 7039 / HB27).